A 406-amino-acid chain; its full sequence is Dual-specificity RNA methyltransferase RlmN (406 aa).

Residue Glu-119 is the Proton acceptor of the active site. The 246-residue stretch at 125–370 folds into the Radical SAM core domain; that stretch reads DKGRGTLCVS…AMVRRTRGDD (246 aa). Cys-132 and Cys-375 are disulfide-bonded. The [4Fe-4S] cluster site is built by Cys-139, Cys-143, and Cys-146. S-adenosyl-L-methionine contacts are provided by residues 192-193, Ser-224, 246-248, and Asn-332; these read GE and SLH. Catalysis depends on Cys-375, which acts as the S-methylcysteine intermediate.

This sequence belongs to the radical SAM superfamily. RlmN family. It depends on [4Fe-4S] cluster as a cofactor.

It is found in the cytoplasm. It catalyses the reaction adenosine(2503) in 23S rRNA + 2 reduced [2Fe-2S]-[ferredoxin] + 2 S-adenosyl-L-methionine = 2-methyladenosine(2503) in 23S rRNA + 5'-deoxyadenosine + L-methionine + 2 oxidized [2Fe-2S]-[ferredoxin] + S-adenosyl-L-homocysteine. It carries out the reaction adenosine(37) in tRNA + 2 reduced [2Fe-2S]-[ferredoxin] + 2 S-adenosyl-L-methionine = 2-methyladenosine(37) in tRNA + 5'-deoxyadenosine + L-methionine + 2 oxidized [2Fe-2S]-[ferredoxin] + S-adenosyl-L-homocysteine. In terms of biological role, specifically methylates position 2 of adenine 2503 in 23S rRNA and position 2 of adenine 37 in tRNAs. m2A2503 modification seems to play a crucial role in the proofreading step occurring at the peptidyl transferase center and thus would serve to optimize ribosomal fidelity. This is Dual-specificity RNA methyltransferase RlmN from Xylella fastidiosa (strain 9a5c).